Reading from the N-terminus, the 142-residue chain is Large ribosomal subunit protein uL13 (142 aa).

It belongs to the universal ribosomal protein uL13 family. Part of the 50S ribosomal subunit.

Its function is as follows. This protein is one of the early assembly proteins of the 50S ribosomal subunit, although it is not seen to bind rRNA by itself. It is important during the early stages of 50S assembly. This chain is Large ribosomal subunit protein uL13, found in Chromobacterium violaceum (strain ATCC 12472 / DSM 30191 / JCM 1249 / CCUG 213 / NBRC 12614 / NCIMB 9131 / NCTC 9757 / MK).